A 476-amino-acid polypeptide reads, in one-letter code: Casein kinase 1-like protein 7 (476 aa).

Residues 9–278 (FKLGKKIGSG…LKRLFRDLFI (270 aa)) form the Protein kinase domain. Residues 15–23 (IGSGSFGEL) and lysine 38 each bind ATP. Catalysis depends on aspartate 128, which acts as the Proton acceptor. Disordered stretches follow at residues 299 to 324 (GSSS…DPIE) and 340 to 464 (PGAV…TRED). A compositionally biased stretch (basic and acidic residues) spans 357-367 (PRDRSRSRNSD). Low complexity predominate over residues 382 to 422 (ANSSSRYRASSSRKAVAASSSRPSSAGGPSESRTSSRLVSS). Over residues 423-432 (SGGGGSGSGN) the composition is skewed to gly residues.

It belongs to the protein kinase superfamily. CK1 Ser/Thr protein kinase family. Casein kinase I subfamily. In terms of assembly, monomer. Post-translationally, autophosphorylated.

It localises to the cytoplasm. It catalyses the reaction L-seryl-[protein] + ATP = O-phospho-L-seryl-[protein] + ADP + H(+). It carries out the reaction L-threonyl-[protein] + ATP = O-phospho-L-threonyl-[protein] + ADP + H(+). Casein kinases are operationally defined by their preferential utilization of acidic proteins such as caseins as substrates. It can phosphorylate a large number of proteins. The protein is Casein kinase 1-like protein 7 of Arabidopsis thaliana (Mouse-ear cress).